A 119-amino-acid polypeptide reads, in one-letter code: Holo-[acyl-carrier-protein] synthase (119 aa).

Mg(2+) contacts are provided by D8 and E58.

Belongs to the P-Pant transferase superfamily. AcpS family. Mg(2+) is required as a cofactor.

It localises to the cytoplasm. It catalyses the reaction apo-[ACP] + CoA = holo-[ACP] + adenosine 3',5'-bisphosphate + H(+). Transfers the 4'-phosphopantetheine moiety from coenzyme A to a Ser of acyl-carrier-protein. This is Holo-[acyl-carrier-protein] synthase from Oceanobacillus iheyensis (strain DSM 14371 / CIP 107618 / JCM 11309 / KCTC 3954 / HTE831).